The following is a 516-amino-acid chain: Putative protein NRT1/ PTR FAMILY 2.2 (516 aa).

11 helical membrane-spanning segments follow: residues 31-51 (TLLG…VFLI), 67-87 (IVNG…DSFF), 90-110 (IPVI…LTMI), 138-158 (ILYI…FTLA), 174-194 (FFNW…TAIV), 201-221 (SWKL…IVFV), 320-340 (LLLA…LIIL), 362-382 (VIVI…VYPM), 394-414 (LQKV…SAIV), 437-457 (FIAS…ITLI), and 476-496 (VYWL…AWFY).

The protein belongs to the major facilitator superfamily. Proton-dependent oligopeptide transporter (POT/PTR) (TC 2.A.17) family. As to expression, not detected.

It localises to the membrane. Its function is as follows. Transporter involved in a passive nitrate efflux. This Arabidopsis thaliana (Mouse-ear cress) protein is Putative protein NRT1/ PTR FAMILY 2.2 (NPF2.2).